A 388-amino-acid polypeptide reads, in one-letter code: Succinate--CoA ligase [ADP-forming] subunit beta (388 aa).

One can recognise an ATP-grasp domain in the interval 9–244; it reads KQLFREYGLP…TTQDDEREMH (236 aa). ATP contacts are provided by residues Lys46, 53–55, Glu99, Ser102, and Glu107; that span reads GRG. The Mg(2+) site is built by Asn199 and Asp213. Residues Asn264 and 321–323 each bind substrate; that span reads GIV.

The protein belongs to the succinate/malate CoA ligase beta subunit family. As to quaternary structure, heterotetramer of two alpha and two beta subunits. Requires Mg(2+) as cofactor.

The enzyme catalyses succinate + ATP + CoA = succinyl-CoA + ADP + phosphate. It carries out the reaction GTP + succinate + CoA = succinyl-CoA + GDP + phosphate. The protein operates within carbohydrate metabolism; tricarboxylic acid cycle; succinate from succinyl-CoA (ligase route): step 1/1. Functionally, succinyl-CoA synthetase functions in the citric acid cycle (TCA), coupling the hydrolysis of succinyl-CoA to the synthesis of either ATP or GTP and thus represents the only step of substrate-level phosphorylation in the TCA. The beta subunit provides nucleotide specificity of the enzyme and binds the substrate succinate, while the binding sites for coenzyme A and phosphate are found in the alpha subunit. The polypeptide is Succinate--CoA ligase [ADP-forming] subunit beta (Psychromonas ingrahamii (strain DSM 17664 / CCUG 51855 / 37)).